The sequence spans 245 residues: MIFVQQFEEVRLILEKAKKITVLTGAGASTESGIPDFRSANGLYADANVEMYLSRGYYNRSPKEFWKHYKEIFQINTFHQYKPNRGHRFLAELEEQGKDITILTQNIDGLHQVGGSKHVIDLHGTLQTAHCPKCKTGYDLQYMIDHEVPRCQKCNFILNPDVVLYGDTLPQYQNAVKRLYETDVLIVMGTSLKVQPVASFPEIAKREVGATTVLVNEELTGQEYNFDYVFQNKIGEFVEGLSSRK.

The Deacetylase sirtuin-type domain maps to 1-245; that stretch reads MIFVQQFEEV…EFVEGLSSRK (245 aa). NAD(+) is bound by residues A26, T30, F37, R38, Q105, I107, D108, and H123. Residue F37 coordinates nicotinamide. Nicotinamide is bound by residues I107 and D108. H123 acts as the Proton acceptor in catalysis. Residues C131, C134, C151, and C154 each coordinate Zn(2+). Positions 190, 191, 216, and 234 each coordinate NAD(+).

It belongs to the sirtuin family. Class U subfamily. The cofactor is Zn(2+).

It localises to the cytoplasm. It carries out the reaction N(6)-acetyl-L-lysyl-[protein] + NAD(+) + H2O = 2''-O-acetyl-ADP-D-ribose + nicotinamide + L-lysyl-[protein]. In terms of biological role, NAD-dependent protein deacetylase which modulates the activities of several enzymes which are inactive in their acetylated form. In Bacillus cereus (strain ZK / E33L), this protein is NAD-dependent protein deacetylase.